We begin with the raw amino-acid sequence, 241 residues long: 2-C-methyl-D-erythritol 4-phosphate cytidylyltransferase (241 aa).

It belongs to the IspD/TarI cytidylyltransferase family. IspD subfamily.

The catalysed reaction is 2-C-methyl-D-erythritol 4-phosphate + CTP + H(+) = 4-CDP-2-C-methyl-D-erythritol + diphosphate. The protein operates within isoprenoid biosynthesis; isopentenyl diphosphate biosynthesis via DXP pathway; isopentenyl diphosphate from 1-deoxy-D-xylulose 5-phosphate: step 2/6. Functionally, catalyzes the formation of 4-diphosphocytidyl-2-C-methyl-D-erythritol from CTP and 2-C-methyl-D-erythritol 4-phosphate (MEP). This Hahella chejuensis (strain KCTC 2396) protein is 2-C-methyl-D-erythritol 4-phosphate cytidylyltransferase.